The primary structure comprises 495 residues: Tripartite motif-containing protein 5 (495 aa).

Alanine 2 is subject to N-acetylalanine. An RING-type zinc finger spans residues 15–60; that stretch reads CPICLELLTEPLSLPCGHSFCQACITANHKKSMLYKEEERSCPVCR. Residue serine 87 is modified to Phosphoserine. The B box-type zinc finger occupies 92–133; that stretch reads QKVDHCARHGEKLLLFCQEDRKVICWLCERSQEHRGHHTFLM. Residues cysteine 97, histidine 100, cysteine 119, and histidine 125 each contribute to the Zn(2+) site. The stretch at 137-177 forms a coiled coil; that stretch reads AQEYHVKLQTALEMLRQKQQEAEKLEADIREEKASWKIQID. The interval 187 to 200 is required for interaction with GABARAP and for autophagy; it reads FEQLREILDWEESN. In terms of domain architecture, B30.2/SPRY spans 283–495; it reads LKGMLDMFRE…VPMTLCSPSS (213 aa).

This sequence belongs to the TRIM/RBCC family. In terms of assembly, can form homodimers and homotrimers. In addition to lower-order dimerization, also exhibits a higher-order multimerization and both low- and high-order multimerizations are essential for its restriction activity. Interacts with BTBD1 and BTBD2. Interacts with PSMC4, PSMC5, PSMD7 and HSPA8/HSC70. Interacts (via B30.2/SPRY domain) with HSPA1A/B. Interacts with PSMC2, MAP3K7/TAK1, TAB2 and TAB3. Interacts with SQSTM1. Interacts with TRIM6 and TRIM34. Interacts with ULK1 (phosphorylated form), GABARAP, GABARAPL1, GABARAPL2, MAP1LC3A, MAP1LC3C and BECN1. In terms of processing, degraded in a proteasome-independent fashion in the absence of viral infection but in a proteasome-dependent fashion following exposure to restriction sensitive virus. Post-translationally, autoubiquitinated in a RING finger- and UBE2D2-dependent manner. Monoubiquitinated by TRIM21. Deubiquitinated by Yersinia YopJ. Ubiquitination may not lead to proteasomal degradation.

Its subcellular location is the cytoplasm. It localises to the nucleus. The catalysed reaction is S-ubiquitinyl-[E2 ubiquitin-conjugating enzyme]-L-cysteine + [acceptor protein]-L-lysine = [E2 ubiquitin-conjugating enzyme]-L-cysteine + N(6)-ubiquitinyl-[acceptor protein]-L-lysine.. The protein operates within protein modification; protein ubiquitination. Functionally, capsid-specific restriction factor that prevents infection from non-host-adapted retroviruses. Blocks viral replication early in the life cycle, after viral entry but before reverse transcription. In addition to acting as a capsid-specific restriction factor, also acts as a pattern recognition receptor that activates innate immune signaling in response to the retroviral capsid lattice. Binding to the viral capsid triggers its E3 ubiquitin ligase activity, and in concert with the heterodimeric ubiquitin conjugating enzyme complex UBE2V1-UBE2N (also known as UBC13-UEV1A complex) generates 'Lys-63'-linked polyubiquitin chains, which in turn are catalysts in the autophosphorylation of the MAP3K7/TAK1 complex (includes TAK1, TAB2, and TAB3). Activation of the MAP3K7/TAK1 complex by autophosphorylation results in the induction and expression of NF-kappa-B and MAPK-responsive inflammatory genes, thereby leading to an innate immune response in the infected cell. Plays a role in regulating autophagy through activation of autophagy regulator BECN1 by causing its dissociation from its inhibitors BCL2 and TAB2. The sequence is that of Tripartite motif-containing protein 5 (TRIM5) from Erythrocebus patas (Red guenon).